Reading from the N-terminus, the 339-residue chain is GTP 3',8-cyclase (339 aa).

The region spanning 13–249 is the Radical SAM core domain; it reads RYGRPLRDLR…GEVAQRHAFA (237 aa). Arg-22 lines the GTP pocket. The [4Fe-4S] cluster site is built by Cys-29 and Cys-33. Tyr-35 is a binding site for S-adenosyl-L-methionine. Cys-36 lines the [4Fe-4S] cluster pocket. Arg-75 provides a ligand contact to GTP. Gly-79 provides a ligand contact to S-adenosyl-L-methionine. Thr-106 is a GTP binding site. Ser-130 lines the S-adenosyl-L-methionine pocket. A GTP-binding site is contributed by Lys-168. Met-202 contributes to the S-adenosyl-L-methionine binding site. [4Fe-4S] cluster contacts are provided by Cys-266 and Cys-269. GTP is bound at residue 271 to 273; it reads RAR. Cys-283 serves as a coordination point for [4Fe-4S] cluster.

Belongs to the radical SAM superfamily. MoaA family. Monomer and homodimer. [4Fe-4S] cluster is required as a cofactor.

It carries out the reaction GTP + AH2 + S-adenosyl-L-methionine = (8S)-3',8-cyclo-7,8-dihydroguanosine 5'-triphosphate + 5'-deoxyadenosine + L-methionine + A + H(+). The protein operates within cofactor biosynthesis; molybdopterin biosynthesis. In terms of biological role, catalyzes the cyclization of GTP to (8S)-3',8-cyclo-7,8-dihydroguanosine 5'-triphosphate. In Xanthomonas campestris pv. campestris (strain 8004), this protein is GTP 3',8-cyclase.